The following is a 152-amino-acid chain: Putative membrane protein insertion efficiency factor (152 aa).

Positions 81–152 (AAGGYDPVPG…IVGSGRGPWV (72 aa)) are disordered.

It belongs to the UPF0161 family.

Its subcellular location is the cell membrane. Could be involved in insertion of integral membrane proteins into the membrane. In Frankia casuarinae (strain DSM 45818 / CECT 9043 / HFP020203 / CcI3), this protein is Putative membrane protein insertion efficiency factor.